Consider the following 282-residue polypeptide: Glutamate racemase (282 aa).

Substrate-binding positions include 13-14 (DS) and 45-46 (YG). Residue Cys-76 is the Proton donor/acceptor of the active site. 77-78 (NT) lines the substrate pocket. The Proton donor/acceptor role is filled by Cys-186. 187-188 (TH) contacts substrate.

The protein belongs to the aspartate/glutamate racemases family.

It catalyses the reaction L-glutamate = D-glutamate. Its pathway is cell wall biogenesis; peptidoglycan biosynthesis. Functionally, provides the (R)-glutamate required for cell wall biosynthesis. This Ralstonia pickettii (strain 12J) protein is Glutamate racemase.